A 152-amino-acid polypeptide reads, in one-letter code: Maintenance of carboxysome distribution protein B (152 aa).

As to quaternary structure, self-associates, interacts with McdA probably via the C-terminus of both proteins. Homohexamerizes. Probably a trimer of dimers. Interacts with most of the shell components of the carboxysome (CcmK2, CcmK3, CcmK4, CcmL and CcmO, but not CcmP) via its C-terminus.

It is found in the carboxysome. In terms of biological role, mcdA and McdB together mediate carboxysome (Cb) spacing, size, ultrastructure and probably inheritance in the cell. Together they prevent Cb aggregation. McdA is an ATPase that forms dynamic gradients on the nucleoid in response to adapter protein McdB, which associates with carboxysomes. The interplay between McdA gradients on the nucleoid and McdB-bound carboxysomes result in the equal spacing of Cbs along the cell length. McdB may have an additional function in cell divison. Stimulates the ATPase activity of McdA, causing McdA to be released from DNA. Overexpression leads to loss of McdA oscillation and formation of large Cb aggregates which colocalize with McdB, as well as diffuse McdB staining in the cytoplasm. Undergoes liquid-liquid phase separation between pH 6.5-7.5 and at concentrations between 1 uM and 167 uM. Forms polar foci upon overexpression in E.coli. Incorrect positioning (aggregation) of carboxysomes results in reduced CO(2) fixation by encapsulated RuBisCO, which leads to slower growth, cell elongation, asymmetric cell division and an increase in RuBisCO levels. This is Maintenance of carboxysome distribution protein B from Synechococcus elongatus (strain ATCC 33912 / PCC 7942 / FACHB-805) (Anacystis nidulans R2).